Consider the following 291-residue polypeptide: 3-methylcatechol 2,3-dioxygenase (291 aa).

VOC domains follow at residues 5 to 119 and 143 to 264; these read RLGY…IYYG and GLGH…YGWG. H146, H210, and E260 together coordinate Fe cation.

It belongs to the extradiol ring-cleavage dioxygenase family. Homooctamer. Fe(2+) is required as a cofactor.

The enzyme catalyses 3-methylcatechol + O2 = 2-hydroxy-6-oxo-2,4-heptadienoate + H(+). Its pathway is xenobiotic degradation; toluene degradation. This Pseudomonas putida (strain ATCC 700007 / DSM 6899 / JCM 31910 / BCRC 17059 / LMG 24140 / F1) protein is 3-methylcatechol 2,3-dioxygenase (todE).